Reading from the N-terminus, the 432-residue chain is Tol-Pal system protein TolB (432 aa).

An N-terminal signal peptide occupies residues 1-24 (MKLVTRMWSILIVFFLAVLQPAQA).

It belongs to the TolB family. As to quaternary structure, the Tol-Pal system is composed of five core proteins: the inner membrane proteins TolA, TolQ and TolR, the periplasmic protein TolB and the outer membrane protein Pal. They form a network linking the inner and outer membranes and the peptidoglycan layer.

It localises to the periplasm. In terms of biological role, part of the Tol-Pal system, which plays a role in outer membrane invagination during cell division and is important for maintaining outer membrane integrity. In Pasteurella multocida (strain Pm70), this protein is Tol-Pal system protein TolB.